Reading from the N-terminus, the 88-residue chain is Sigma-conotoxin GVIIIA (88 aa).

An N-terminal signal peptide occupies residues 1 to 20; that stretch reads MMSKMGAMFVLLLLFTLASS. Positions 21 to 46 are excised as a propeptide; it reads LQEGDVQARKTRLKSDFYRALARDDR. 4-hydroxyproline is present on Pro55. The residue at position 80 (Trp80) is a 6'-bromotryptophan. The residue at position 87 (Ser87) is a Serine amide.

This sequence belongs to the conotoxin S superfamily. Post-translationally, contains 5 disulfide bonds. As to expression, expressed by the venom duct.

The protein localises to the secreted. In terms of biological role, sigma-conotoxins bind and inhibit serotonin-gated ion channels. This peptide selectively and reversibly inhibits 5-hydroxytryptamine 3 receptor (HTR3A) through competitive antagonism (IC(50)=53-86.8 nM). This chain is Sigma-conotoxin GVIIIA, found in Conus geographus (Geography cone).